We begin with the raw amino-acid sequence, 108 residues long: Hrp pili protein HrpA (108 aa).

Over residues N41–S56 the composition is skewed to polar residues. Positions N41–N73 are disordered.

The protein belongs to the HrpA type 1 family.

It is found in the secreted. Its subcellular location is the fimbrium. Major structural protein of the hrp pilus, which is a component of the type III secretion system (T3SS, Hrp secretion system) required for effector protein delivery, parasitism, and pathogenicity. The hrp pilus functions as a conduit for protein delivery into the host cell. Also, affects the expression of T3SS-associated genes. Required for full expression of genes that encode regulatory, secretion, and effector proteins of the T3SS. HrpA-mediated gene regulation apparently is through effect on the mRNA level of HrpR and HrpS. This is Hrp pili protein HrpA (hrpA) from Pseudomonas syringae pv. syringae.